Consider the following 332-residue polypeptide: Probable farnesyl diphosphate synthase (332 aa).

The isopentenyl diphosphate site is built by Lys75, Arg78, and His107. Positions 114 and 120 each coordinate Mg(2+). Arg125 provides a ligand contact to (2E)-geranyl diphosphate. Arg126 serves as a coordination point for isopentenyl diphosphate. (2E)-geranyl diphosphate is bound by residues Lys208, Gln250, and Lys267.

The protein belongs to the FPP/GGPP synthase family. Mg(2+) is required as a cofactor.

The protein localises to the cytoplasm. The catalysed reaction is isopentenyl diphosphate + (2E)-geranyl diphosphate = (2E,6E)-farnesyl diphosphate + diphosphate. This is Probable farnesyl diphosphate synthase from Sinorhizobium fredii (strain NBRC 101917 / NGR234).